Consider the following 1165-residue polypeptide: Activity-dependent neuroprotector homeobox protein 2 (1165 aa).

A C2H2-type 1 zinc finger spans residues 73–96 (YCCSLCRYSTKVLTSLKNHLHRYH). The C2H2-type 2; degenerate zinc-finger motif lies at 106–128 (IPCPNCPFSSQPRVVGKHFRMFH). K146 is covalently cross-linked (Glycyl lysine isopeptide (Lys-Gly) (interchain with G-Cter in SUMO2)). Residues 155 to 178 (FTCLKCNFSNTLYYSMKKHVLVAH) form a C2H2-type 3; degenerate zinc finger. A C2H2-type 4 zinc finger spans residues 215–240 (YYCKKCSAIASSQDALMYHILTSDAH). Low complexity predominate over residues 303–318 (SGTVQSVTVTPGTSGS). Residues 303 to 327 (SGTVQSVTVTPGTSGSLTHSPPTTA) are disordered. The C2H2-type 5; degenerate zinc-finger motif lies at 696 to 718 (KTCPVCNELFPSNVYQVHMEVAH). The C2H2-type 6; degenerate zinc finger occupies 724-746 (QLCQVCNELFPANVYQVHMEVAH). The C2H2-type 7; degenerate zinc-finger motif lies at 777 to 798 (VRCLSCKCLVSQEELMHHLLMH). 2 C2H2-type zinc fingers span residues 800-823 (LGCL…RTKH) and 905-935 (LTCP…PTVH). Positions 1005–1068 (PVKRKLPEGH…SGPSEDSLQA (64 aa)) are disordered. Residues K1009 and K1048 each participate in a glycyl lysine isopeptide (Lys-Gly) (interchain with G-Cter in SUMO2) cross-link. The span at 1009-1024 (KLPEGHLGPEDQRDGE) shows a compositional bias: basic and acidic residues. The segment at residues 1090-1132 (DYFHRRPYPSRKEVELLSSLLWVWKIDVASFFGKRRYICMKAI) is a DNA-binding region (homeobox).

It belongs to the krueppel C2H2-type zinc-finger protein family. In terms of assembly, may interact with SMARCA4/BRG1. As to expression, expressed widely, with the highest level in the brain.

The protein resides in the nucleus. Its function is as follows. May be involved in transcriptional regulation. May play a role in neuronal function; perhaps involved in protection of brain tissues from oxidative stress. May be involved in erythroid differentiation. This Mus musculus (Mouse) protein is Activity-dependent neuroprotector homeobox protein 2 (Adnp2).